The primary structure comprises 192 residues: Peptidyl-tRNA hydrolase (192 aa).

Tyrosine 16 contributes to the tRNA binding site. Histidine 21 serves as the catalytic Proton acceptor. The tRNA site is built by tyrosine 66 and asparagine 68.

This sequence belongs to the PTH family. As to quaternary structure, monomer.

The protein resides in the cytoplasm. It catalyses the reaction an N-acyl-L-alpha-aminoacyl-tRNA + H2O = an N-acyl-L-amino acid + a tRNA + H(+). Its function is as follows. Hydrolyzes ribosome-free peptidyl-tRNAs (with 1 or more amino acids incorporated), which drop off the ribosome during protein synthesis, or as a result of ribosome stalling. Catalyzes the release of premature peptidyl moieties from peptidyl-tRNA molecules trapped in stalled 50S ribosomal subunits, and thus maintains levels of free tRNAs and 50S ribosomes. The protein is Peptidyl-tRNA hydrolase of Aquifex aeolicus (strain VF5).